The following is a 389-amino-acid chain: Succinate--CoA ligase [ADP-forming] subunit beta (389 aa).

The region spanning 9-244 (KELLRQFNVP…IDEEDAAEIE (236 aa)) is the ATP-grasp domain. ATP-binding positions include lysine 46, 53–55 (GRG), glutamate 99, alanine 102, and glutamate 107. 2 residues coordinate Mg(2+): asparagine 199 and aspartate 213. Residues asparagine 264 and 321 to 323 (GIM) each bind substrate.

The protein belongs to the succinate/malate CoA ligase beta subunit family. Heterotetramer of two alpha and two beta subunits. Requires Mg(2+) as cofactor.

The catalysed reaction is succinate + ATP + CoA = succinyl-CoA + ADP + phosphate. It catalyses the reaction GTP + succinate + CoA = succinyl-CoA + GDP + phosphate. It participates in carbohydrate metabolism; tricarboxylic acid cycle; succinate from succinyl-CoA (ligase route): step 1/1. Its function is as follows. Succinyl-CoA synthetase functions in the citric acid cycle (TCA), coupling the hydrolysis of succinyl-CoA to the synthesis of either ATP or GTP and thus represents the only step of substrate-level phosphorylation in the TCA. The beta subunit provides nucleotide specificity of the enzyme and binds the substrate succinate, while the binding sites for coenzyme A and phosphate are found in the alpha subunit. In Polynucleobacter necessarius subsp. necessarius (strain STIR1), this protein is Succinate--CoA ligase [ADP-forming] subunit beta.